The following is a 245-amino-acid chain: Exosome complex component RRP41 (245 aa).

At alanine 2 the chain carries N-acetylalanine.

It belongs to the RNase PH family. Component of the RNA exosome core complex (Exo-9), composed of EXOSC1, EXOSC2, EXOSC3, EXOSC4, EXOSC5, EXOSC6, EXOSC7, EXOSC8 and EXOSC9; within the complex interacts with EXOSC2, EXOSC7 and EXOSC9. The catalytically inactive RNA exosome core complex (Exo-9) associates with the catalytic subunit EXOSC10/RRP6. Exo-9 may associate with DIS3 to form the nucleolar exosome complex, or DIS3L to form the cytoplasmic exosome complex. Exo-9 is formed by a hexameric base ring consisting of the heterodimers EXOSC4-EXOSC9, EXOSC5-EXOSC8 and EXOSC6-EXOSC7, and a cap ring consisting of EXOSC1, EXOSC2 and EXOSC3. The RNA exosome complex associates with cofactors C1D/RRP47, MPHOSPH6/MPP6 and MTREX/MTR4. Interacts with DDX60. Interacts with DIS3; the interaction is direct.

It is found in the cytoplasm. Its subcellular location is the nucleus. The protein localises to the nucleolus. The protein resides in the nucleoplasm. Non-catalytic component of the RNA exosome complex which has 3'-&gt;5' exoribonuclease activity and participates in a multitude of cellular RNA processing and degradation events. In the nucleus, the RNA exosome complex is involved in proper maturation of stable RNA species such as rRNA, snRNA and snoRNA, in the elimination of RNA processing by-products and non-coding 'pervasive' transcripts, such as antisense RNA species and promoter-upstream transcripts (PROMPTs), and of mRNAs with processing defects, thereby limiting or excluding their export to the cytoplasm. The RNA exosome may be involved in Ig class switch recombination (CSR) and/or Ig variable region somatic hypermutation (SHM) by targeting AICDA deamination activity to transcribed dsDNA substrates. In the cytoplasm, the RNA exosome complex is involved in general mRNA turnover and specifically degrades inherently unstable mRNAs containing AU-rich elements (AREs) within their 3' untranslated regions, and in RNA surveillance pathways, preventing translation of aberrant mRNAs. It seems to be involved in degradation of histone mRNA. The catalytic inactive RNA exosome core complex of 9 subunits (Exo-9) is proposed to play a pivotal role in the binding and presentation of RNA for ribonucleolysis, and to serve as a scaffold for the association with catalytic subunits and accessory proteins or complexes. EXOSC4 binds to ARE-containing RNAs. The polypeptide is Exosome complex component RRP41 (Exosc4) (Mus musculus (Mouse)).